The primary structure comprises 77 residues: U8-lycotoxin-Ls1s (77 aa).

Residues 1-20 form the signal peptide; the sequence is MKLIIFTGLVLFAIVSLIEA. A propeptide spanning residues 21-26 is cleaved from the precursor; it reads QAENER.

The protein belongs to the neurotoxin 19 (CSTX) family. 08 (U8-Lctx) subfamily. In terms of processing, contains 4 disulfide bonds. Expressed by the venom gland.

It localises to the secreted. The protein is U8-lycotoxin-Ls1s of Lycosa singoriensis (Wolf spider).